A 2121-amino-acid chain; its full sequence is Non-reducing polyketide synthase aoiG (2121 aa).

One can recognise a Starter acyltransferase (SAT) domain in the interval 5 to 258 (YIFGDQTVRV…LPVSIYAPYH (254 aa)). The Ketosynthase family 3 (KS3) domain occupies 386 to 817 (SSKIAIIGFS…GGNTAVLVED (432 aa)). Catalysis depends on for beta-ketoacyl synthase activity residues cysteine 558, histidine 693, and histidine 735. The 319-residue stretch at 921 to 1239 (FLFTGQGAQQ…LSVLHLAGVR (319 aa)) folds into the Malonyl-CoA:ACP transacylase (MAT) domain. The segment at 1302-1433 (QKILEEEMTA…CTIELQRPHQ (132 aa)) is N-terminal hotdog fold. The region spanning 1302-1608 (QKILEEEMTA…FQKVARRVLE (307 aa)) is the PKS/mFAS DH domain. Histidine 1334 acts as the Proton acceptor; for dehydratase activity in catalysis. A C-terminal hotdog fold region spans residues 1461–1608 (THKMRRGVAY…FQKVARRVLE (148 aa)). The active-site Proton donor; for dehydratase activity is the aspartate 1519. In terms of domain architecture, Carrier 1 spans 1646–1723 (PHVEDAWQQV…SLRIYLNMSS (78 aa)). Serine 1683 bears the O-(pantetheine 4'-phosphoryl)serine mark. Positions 1728–1752 (DSIETSSYPTPDESTTTTITSPSGS) are enriched in low complexity. The disordered stretch occupies residues 1728–1760 (DSIETSSYPTPDESTTTTITSPSGSDRNVGRNS). The Carrier 2 domain occupies 1763–1840 (DGVGTTVGLV…AITAALHAIF (78 aa)). The residue at position 1800 (serine 1800) is an O-(pantetheine 4'-phosphoryl)serine. Residues 1872–1976 (TLFLFPDGSG…ILIDSPNPMG (105 aa)) are TE/CLC (thioesterase/Claisen cyclase) domain.

Pantetheine 4'-phosphate serves as cofactor.

Its function is as follows. Non-reducing polyketide synthase; part of the gene cluster that mediates the biosynthesis of a methylated derivative of known natural products orthosporin and diaporthin. AoiG catalyzes the biosynthesis of the hexaketide isocoumarin scaffold, via condensation of one acetyl-CoA starter unit with 6 malonyl-CoA units. An oxidoreductase that has still to be identified catalyzes the stereospecific reduction of the carbonyl moiety of the hexaketide isocoumarin scaffold to generate the S-configured secondary alcohol at C-11 of orthosporin. The methyltrasferase aoiF then catalyzes the biotransformation of not only orthosporin to diaporthin but also diaporthin to the final product, by performing a tandem methylation of the polyketide core. This Aspergillus oryzae (strain ATCC 42149 / RIB 40) (Yellow koji mold) protein is Non-reducing polyketide synthase aoiG.